The following is a 348-amino-acid chain: MSKQTLILLYGGRSAEREVSVLSAESVMRAIDYTKFFVKTYFISQTGQFIKTQEFSSQPAATERLMTNATIRLEQQIRPSDIYEEGAVVFPVLHGPMGEDGSIQGFLEVLKMPYVGTNILSSSVAMDKITTKRVLESADIPQVAYTVYIEGQDLDRCLAETEAVLSYPVFVKPANMGSSVGISKAESEEELRAAILLALTYDSRILIEQGVLAREIEVGLLGNTDVKSTLPGEVVKNVDFYDYQAKYIDNEITMAIPAAIDESAMTSMRTYAETAFKAIGACGLSRCDFFLGQDGQIYLNELNTMPGFTQWSMYPLLWEHMGLSYAELIEELVRLAQEMFEKREGHLI.

The ATP-grasp domain maps to 132 to 334 (KRVLESADIP…YAELIEELVR (203 aa)). An ATP-binding site is contributed by 162 to 217 (EAVLSYPVFVKPANMGSSVGISKAESEEELRAAILLALTYDSRILIEQGVLAREIE). Aspartate 288, glutamate 301, and asparagine 303 together coordinate Mg(2+).

The protein belongs to the D-alanine--D-alanine ligase family. The cofactor is Mg(2+). Requires Mn(2+) as cofactor.

It localises to the cytoplasm. It carries out the reaction 2 D-alanine + ATP = D-alanyl-D-alanine + ADP + phosphate + H(+). The protein operates within cell wall biogenesis; peptidoglycan biosynthesis. Cell wall formation. This Streptococcus equi subsp. zooepidemicus (strain MGCS10565) protein is D-alanine--D-alanine ligase.